Reading from the N-terminus, the 549-residue chain is Speedy protein E3 (549 aa).

Over residues 1–15 the composition is skewed to low complexity; sequence MTSHQPQPQEEQSPQ. Disordered stretches follow at residues 1–74, 126–145, 188–218, 261–291, and 334–364; these read MTSH…EPEE, KRECLDESDDEPEKELAPEP, and SPPRRSLGCKRKRECLDESDDEPEKELAPEP. 5 stretches are compositionally biased toward acidic residues: residues 58-74, 131-145, 204-218, 277-291, and 350-364; these read DESDDEPEKELAPEPEE and DESDDEPEKELAPEP.

It belongs to the Speedy/Ringo family. In terms of tissue distribution, predominantly expressed in testis and spleen.

This Homo sapiens (Human) protein is Speedy protein E3.